The chain runs to 1031 residues: Caprin-2 (1031 aa).

5 disordered regions span residues 1-27 (MKSAKSQVNQDQQGENQRALSPLQSTL), 364-458 (LQEE…SWEN), 500-520 (PKDVPKPLPQPIDSSSALPKD), 605-658 (DQAS…SSEA), and 830-876 (RSGT…SMTP). Composition is skewed to polar residues over residues 425 to 439 (VSVQSEQSGSRSWTT) and 446 to 458 (ASVQPGTPVSWEN). Positions 608–646 (SSGSETEFTTSETPEMVVSPCKPKPASALASPNPPLSKS) are enriched in low complexity. Residues 830-853 (RSGTSSGLQANSRAGWSDSSQVSS) show a composition bias toward polar residues. Ser852 and Ser853 each carry phosphoserine. A C1q domain is found at 897–1031 (PQQMRVAFSA…TFSGYLLYQD (135 aa)). Ca(2+) contacts are provided by Asp982 and Glu988.

This sequence belongs to the caprin family. Homotrimer; via C1q domain. Found in a complex with LRP6, CCNY and CDK14 during G2/M stage; CAPRIN2 functions as a scaffold for the complex by binding to CCNY via its N terminus and to CDK14 via its C terminus. Interacts with LRP5. Interacts with LRP6. In terms of tissue distribution, specifically expressed in brain (at protein level).

Its subcellular location is the cytoplasm. It is found in the cell membrane. Functionally, promotes phosphorylation of the Wnt coreceptor LRP6, leading to increased activity of the canonical Wnt signaling pathway. Facilitates constitutive LRP6 phosphorylation by CDK14/CCNY during G2/M stage of the cell cycle, which may potentiate cells for Wnt signaling. May regulate the transport and translation of mRNAs, modulating for instance the expression of proteins involved in synaptic plasticity in neurons. Involved in regulation of growth as erythroblasts shift from a highly proliferative state towards their terminal phase of differentiation. May be involved in apoptosis. The protein is Caprin-2 of Mus musculus (Mouse).